Here is a 306-residue protein sequence, read N- to C-terminus: Cathepsin Z (306 aa).

Residues 1–20 (MLAILFNFFLLTYFTNITLG) form the signal peptide. Residues 21–65 (KVGKSIDLDTRNGYNVHGCYKQTGKIYAHKTYPRQYEAENYNFDD) constitute a propeptide, activation peptide. Intrachain disulfides connect C39-C96, C93-C136, C130-C168, C158-C174, and C177-C182. The active site involves C96. N-linked (GlcNAc...) asparagine glycosylation is present at N187. Cysteines 217 and 299 form a disulfide. Active-site residues include H243 and N265. N286 carries an N-linked (GlcNAc...) asparagine glycan.

This sequence belongs to the peptidase C1 family.

It localises to the cytoplasmic vesicle. The protein resides in the secretory vesicle. Its subcellular location is the secreted. The enzyme catalyses Release of C-terminal amino acid residues with broad specificity, but lacks action on C-terminal proline. Shows weak endopeptidase activity.. The disulfide bridge formed between Cys-39 in the propeptide and the active site residue Cys-96 may prevent activation of the zymogen through formation of a reversible covalent bond with the active site residue. In terms of biological role, exhibits carboxy-monopeptidase as well as carboxy-dipeptidase activity. Plays an essential role in molting, a process during larval stages in which a new cuticle is formed and the old cuticle is shed. Required for the degradation and shedding of the old cuticle. The protein is Cathepsin Z of Onchocerca volvulus.